The following is a 330-amino-acid chain: tRNA(Ile)-lysidine synthase (330 aa).

31 to 36 (SGGQDS) provides a ligand contact to ATP.

Belongs to the tRNA(Ile)-lysidine synthase family.

The protein resides in the cytoplasm. It carries out the reaction cytidine(34) in tRNA(Ile2) + L-lysine + ATP = lysidine(34) in tRNA(Ile2) + AMP + diphosphate + H(+). Ligates lysine onto the cytidine present at position 34 of the AUA codon-specific tRNA(Ile) that contains the anticodon CAU, in an ATP-dependent manner. Cytidine is converted to lysidine, thus changing the amino acid specificity of the tRNA from methionine to isoleucine. The polypeptide is tRNA(Ile)-lysidine synthase (Synechocystis sp. (strain ATCC 27184 / PCC 6803 / Kazusa)).